Here is a 103-residue protein sequence, read N- to C-terminus: Large ribosomal subunit protein eL42 (103 aa).

Residues Cys18 and Cys21 each contribute to the Zn(2+) site. Residues 18 to 81 (CPKCRTHTEH…TVLKLKCSKC (64 aa)) form a C4-type zinc finger. Residues 40 to 62 (LSEGERRYARKKKGYGSKRKPEQ) are disordered. Over residues 47–57 (YARKKKGYGSK) the composition is skewed to basic residues. Cys78 and Cys81 together coordinate Zn(2+).

The protein belongs to the eukaryotic ribosomal protein eL42 family. Part of the 50S ribosomal subunit. Zn(2+) is required as a cofactor.

In terms of biological role, binds to the 23S rRNA. The sequence is that of Large ribosomal subunit protein eL42 from Desulfurococcus amylolyticus (strain DSM 18924 / JCM 16383 / VKM B-2413 / 1221n) (Desulfurococcus kamchatkensis).